The primary structure comprises 90 residues: Envelope protein US9 homolog (90 aa).

Over 1 to 63 (MEPLRLADAE…IRRRRRQTRA (63 aa)) the chain is Intravirion. Residues 12–13 (LL) carry the Di-leucine internalization motif motif. Positions 29 to 38 (EAYYTESDDE) are acidic. A helical; Signal-anchor for type II membrane protein membrane pass occupies residues 64–84 (AGFVAAFVLVALISGGLGALM). Over 85 to 90 (CWLAYR) the chain is Virion surface.

The protein belongs to the alphaherpesvirinae envelope protein US9 family. Phosphorylated on serines within the acidic cluster. Phosphorylation determines whether endocytosed viral US9 traffics to the trans-Golgi network or recycles to the cell membrane.

It is found in the virion membrane. The protein resides in the host Golgi apparatus membrane. The protein localises to the host smooth endoplasmic reticulum membrane. It localises to the host cell membrane. Essential for the anterograde spread of the infection throughout the host nervous system. Together with the gE/gI heterodimer, US9 is involved in the sorting and transport of viral structural components toward axon tips. This Cercopithecine herpesvirus 1 (CeHV-1) protein is Envelope protein US9 homolog.